Here is a 484-residue protein sequence, read N- to C-terminus: Ribosomal RNA small subunit methyltransferase F (484 aa).

S-adenosyl-L-methionine is bound by residues 126 to 132, Glu150, Asp177, and Asp195; that span reads AAAPGSK. Cys248 functions as the Nucleophile in the catalytic mechanism.

The protein belongs to the class I-like SAM-binding methyltransferase superfamily. RsmB/NOP family.

It localises to the cytoplasm. The enzyme catalyses cytidine(1407) in 16S rRNA + S-adenosyl-L-methionine = 5-methylcytidine(1407) in 16S rRNA + S-adenosyl-L-homocysteine + H(+). Specifically methylates the cytosine at position 1407 (m5C1407) of 16S rRNA. This is Ribosomal RNA small subunit methyltransferase F from Pectobacterium atrosepticum (strain SCRI 1043 / ATCC BAA-672) (Erwinia carotovora subsp. atroseptica).